Reading from the N-terminus, the 335-residue chain is Large ribosomal subunit protein uL10 (335 aa).

Positions 306 to 335 (VEETVEEEEEEEEEEDAEEEAAAGLGALFG) are disordered. Over residues 308-326 (ETVEEEEEEEEEEDAEEEA) the composition is skewed to acidic residues.

The protein belongs to the universal ribosomal protein uL10 family. In terms of assembly, part of the 50S ribosomal subunit. Forms part of the ribosomal stalk which helps the ribosome interact with GTP-bound translation factors. Forms a heptameric L10(L12)2(L12)2(L12)2 complex, where L10 forms an elongated spine to which the L12 dimers bind in a sequential fashion.

Functionally, forms part of the ribosomal stalk, playing a central role in the interaction of the ribosome with GTP-bound translation factors. This is Large ribosomal subunit protein uL10 from Methanobrevibacter smithii (strain ATCC 35061 / DSM 861 / OCM 144 / PS).